The sequence spans 334 residues: Phosphate acyltransferase (334 aa).

It belongs to the PlsX family. Homodimer. Probably interacts with PlsY.

It localises to the cytoplasm. The catalysed reaction is a fatty acyl-[ACP] + phosphate = an acyl phosphate + holo-[ACP]. It functions in the pathway lipid metabolism; phospholipid metabolism. Functionally, catalyzes the reversible formation of acyl-phosphate (acyl-PO(4)) from acyl-[acyl-carrier-protein] (acyl-ACP). This enzyme utilizes acyl-ACP as fatty acyl donor, but not acyl-CoA. The sequence is that of Phosphate acyltransferase from Fervidobacterium nodosum (strain ATCC 35602 / DSM 5306 / Rt17-B1).